A 161-amino-acid polypeptide reads, in one-letter code: Nucleotide-binding protein Spea_3114 (161 aa).

This sequence belongs to the YajQ family.

Functionally, nucleotide-binding protein. The polypeptide is Nucleotide-binding protein Spea_3114 (Shewanella pealeana (strain ATCC 700345 / ANG-SQ1)).